Reading from the N-terminus, the 215-residue chain is MTDSSPQSNPNAVPGAADVPAAAEGQQQEQRRGGGRGERGDRRGGRRGDRRNQERDSEWQERVVQIRRVSKTVKGGKKMSFRAIVVVGNEKGQVGVGVGKAGDVIGAVRKGVADGKKHLVKVPLTRHNSIPTLSNGRDGAASVLIRPAAPGTGVIAGGSIRTVLELAGIKNVLAKRLGSKTPLNNARAAMVALSLLRTHKETAKERGISLEQIYS.

Residues 1-62 form a disordered region; that stretch reads MTDSSPQSNP…QERDSEWQER (62 aa). Low complexity predominate over residues 9-28; that stretch reads NPNAVPGAADVPAAAEGQQQ. Positions 29 to 61 are enriched in basic and acidic residues; it reads EQRRGGGRGERGDRRGGRRGDRRNQERDSEWQE. The S5 DRBM domain occupies 59-122; the sequence is WQERVVQIRR…ADGKKHLVKV (64 aa).

The protein belongs to the universal ribosomal protein uS5 family. In terms of assembly, part of the 30S ribosomal subunit. Contacts proteins S4 and S8.

In terms of biological role, with S4 and S12 plays an important role in translational accuracy. Functionally, located at the back of the 30S subunit body where it stabilizes the conformation of the head with respect to the body. The chain is Small ribosomal subunit protein uS5 from Parasynechococcus marenigrum (strain WH8102).